The primary structure comprises 436 residues: Trigger factor (436 aa).

The PPIase FKBP-type domain maps to 163–248; that stretch reads GDTVVIDFDG…IHEVKEKQLP (86 aa).

It belongs to the FKBP-type PPIase family. Tig subfamily.

The protein resides in the cytoplasm. It carries out the reaction [protein]-peptidylproline (omega=180) = [protein]-peptidylproline (omega=0). Its function is as follows. Involved in protein export. Acts as a chaperone by maintaining the newly synthesized protein in an open conformation. Functions as a peptidyl-prolyl cis-trans isomerase. The chain is Trigger factor from Levilactobacillus brevis (strain ATCC 367 / BCRC 12310 / CIP 105137 / JCM 1170 / LMG 11437 / NCIMB 947 / NCTC 947) (Lactobacillus brevis).